Reading from the N-terminus, the 508-residue chain is Ribonuclease Y (508 aa).

Residues 198-264 (TVSVINLPND…RLTIEKLITD (67 aa)) enclose the KH domain. One can recognise an HD domain in the interval 324-417 (VLTHSIEVAK…VQAADAVSAS (94 aa)).

This sequence belongs to the RNase Y family.

Its function is as follows. Endoribonuclease that initiates mRNA decay. The sequence is that of Ribonuclease Y from Fusobacterium nucleatum subsp. nucleatum (strain ATCC 25586 / DSM 15643 / BCRC 10681 / CIP 101130 / JCM 8532 / KCTC 2640 / LMG 13131 / VPI 4355).